Consider the following 294-residue polypeptide: NAD kinase (294 aa).

Aspartate 74 serves as the catalytic Proton acceptor. NAD(+) contacts are provided by residues aspartate 74–glycine 75, asparagine 148–glutamate 149, histidine 159, arginine 176, aspartate 178, threonine 189–serine 194, and glutamine 249.

This sequence belongs to the NAD kinase family. A divalent metal cation serves as cofactor.

The protein localises to the cytoplasm. It catalyses the reaction NAD(+) + ATP = ADP + NADP(+) + H(+). In terms of biological role, involved in the regulation of the intracellular balance of NAD and NADP, and is a key enzyme in the biosynthesis of NADP. Catalyzes specifically the phosphorylation on 2'-hydroxyl of the adenosine moiety of NAD to yield NADP. The chain is NAD kinase from Vibrio parahaemolyticus serotype O3:K6 (strain RIMD 2210633).